A 123-amino-acid chain; its full sequence is Large ribosomal subunit protein eL8 (123 aa).

It belongs to the eukaryotic ribosomal protein eL8 family. Part of the 50S ribosomal subunit. Probably part of the RNase P complex.

Its subcellular location is the cytoplasm. Functionally, multifunctional RNA-binding protein that recognizes the K-turn motif in ribosomal RNA, the RNA component of RNase P, box H/ACA, box C/D and box C'/D' sRNAs. The protein is Large ribosomal subunit protein eL8 of Thermococcus gammatolerans (strain DSM 15229 / JCM 11827 / EJ3).